The primary structure comprises 206 residues: Small ribosomal subunit protein uS4 (206 aa).

The 66-residue stretch at 98-163 folds into the S4 RNA-binding domain; the sequence is MRLDNVVYRL…SEKFKTFVEN (66 aa).

This sequence belongs to the universal ribosomal protein uS4 family. Part of the 30S ribosomal subunit. Contacts protein S5. The interaction surface between S4 and S5 is involved in control of translational fidelity.

In terms of biological role, one of the primary rRNA binding proteins, it binds directly to 16S rRNA where it nucleates assembly of the body of the 30S subunit. With S5 and S12 plays an important role in translational accuracy. The polypeptide is Small ribosomal subunit protein uS4 (Clostridium botulinum (strain Alaska E43 / Type E3)).